A 217-amino-acid polypeptide reads, in one-letter code: Probable transaldolase (217 aa).

Lysine 83 functions as the Schiff-base intermediate with substrate in the catalytic mechanism.

It belongs to the transaldolase family. Type 3B subfamily.

It is found in the cytoplasm. It catalyses the reaction D-sedoheptulose 7-phosphate + D-glyceraldehyde 3-phosphate = D-erythrose 4-phosphate + beta-D-fructose 6-phosphate. Its pathway is carbohydrate degradation; pentose phosphate pathway; D-glyceraldehyde 3-phosphate and beta-D-fructose 6-phosphate from D-ribose 5-phosphate and D-xylulose 5-phosphate (non-oxidative stage): step 2/3. Transaldolase is important for the balance of metabolites in the pentose-phosphate pathway. The sequence is that of Probable transaldolase from Ruegeria pomeroyi (strain ATCC 700808 / DSM 15171 / DSS-3) (Silicibacter pomeroyi).